The sequence spans 752 residues: Translation initiation factor IF-2 (752 aa).

A disordered region spans residues 26–167; the sequence is RQGMGVKSHM…QPTQRKDKPL (142 aa). A compositionally biased stretch (polar residues) spans 34–47; that stretch reads HMSSVTPDQAQQLR. The span at 72 to 81 shows a compositional bias: low complexity; sequence KQNNHQAQNH. The segment covering 83–96 has biased composition (basic and acidic residues); sequence QHHDHDKTQNERPQ. Over residues 101-129 the composition is skewed to polar residues; it reads SRSNNGTKDNNQHQNNGGRFGGSLNNDQG. A compositionally biased stretch (basic residues) spans 131–150; the sequence is NGKRFNKKNKKNKKHNKNKR. The span at 151–167 shows a compositional bias: basic and acidic residues; it reads LREVAHKQPTQRKDKPL. Residues 253–422 enclose the tr-type G domain; the sequence is TRPAVVTVMG…LLQAEMLELK (170 aa). A G1 region spans residues 262–269; it reads GHVDHGKT. 262–269 contacts GTP; the sequence is GHVDHGKT. The G2 stretch occupies residues 287 to 291; that stretch reads GITQE. The segment at 308–311 is G3; that stretch reads DTPG. GTP-binding positions include 308 to 312 and 362 to 365; these read DTPGH and NKID. Positions 362-365 are G4; sequence NKID. The G5 stretch occupies residues 398 to 400; it reads SAK.

The protein belongs to the TRAFAC class translation factor GTPase superfamily. Classic translation factor GTPase family. IF-2 subfamily.

It localises to the cytoplasm. Functionally, one of the essential components for the initiation of protein synthesis. Protects formylmethionyl-tRNA from spontaneous hydrolysis and promotes its binding to the 30S ribosomal subunits. Also involved in the hydrolysis of GTP during the formation of the 70S ribosomal complex. In Limosilactobacillus reuteri (strain DSM 20016) (Lactobacillus reuteri), this protein is Translation initiation factor IF-2.